We begin with the raw amino-acid sequence, 236 residues long: 5'-methylthioadenosine/S-adenosylhomocysteine nucleosidase (236 aa).

E12 acts as the Proton acceptor in catalysis. Substrate is bound by residues G78, I153, and 174-175; that span reads ME. Residue D198 is the Proton donor of the active site.

This sequence belongs to the PNP/UDP phosphorylase family. MtnN subfamily.

The catalysed reaction is S-adenosyl-L-homocysteine + H2O = S-(5-deoxy-D-ribos-5-yl)-L-homocysteine + adenine. It catalyses the reaction S-methyl-5'-thioadenosine + H2O = 5-(methylsulfanyl)-D-ribose + adenine. The enzyme catalyses 5'-deoxyadenosine + H2O = 5-deoxy-D-ribose + adenine. Its pathway is amino-acid biosynthesis; L-methionine biosynthesis via salvage pathway; S-methyl-5-thio-alpha-D-ribose 1-phosphate from S-methyl-5'-thioadenosine (hydrolase route): step 1/2. In terms of biological role, catalyzes the irreversible cleavage of the glycosidic bond in both 5'-methylthioadenosine (MTA) and S-adenosylhomocysteine (SAH/AdoHcy) to adenine and the corresponding thioribose, 5'-methylthioribose and S-ribosylhomocysteine, respectively. Also cleaves 5'-deoxyadenosine, a toxic by-product of radical S-adenosylmethionine (SAM) enzymes, into 5-deoxyribose and adenine. This Shewanella baltica (strain OS155 / ATCC BAA-1091) protein is 5'-methylthioadenosine/S-adenosylhomocysteine nucleosidase.